The sequence spans 353 residues: Photosystem II protein D1 (353 aa).

An N-acetylthreonine modification is found at T2. Position 2 is a phosphothreonine (T2). The next 3 membrane-spanning stretches (helical) occupy residues 29–46 (YIGW…TATS), 118–133 (HFLL…EWEL), and 142–156 (WIAV…AAAA). H118 lines the chlorophyll a pocket. Position 126 (Y126) interacts with pheophytin a. Residues D170 and E189 each contribute to the [CaMn4O5] cluster site. Residues 197-218 (FHMLGVAGVFGGSLFSAMHGSL) form a helical membrane-spanning segment. Chlorophyll a is bound at residue H198. Residues H215 and 264-265 (SF) contribute to the a quinone site. H215 is a Fe cation binding site. A Fe cation-binding site is contributed by H272. The helical transmembrane segment at 274 to 288 (FLAAWPVVGIWFTAL) threads the bilayer. The [CaMn4O5] cluster site is built by H332, E333, D342, and A344. Residues 345-353 (SVDAPSING) constitute a propeptide that is removed on maturation.

Belongs to the reaction center PufL/M/PsbA/D family. PSII is composed of 1 copy each of membrane proteins PsbA, PsbB, PsbC, PsbD, PsbE, PsbF, PsbH, PsbI, PsbJ, PsbK, PsbL, PsbM, PsbT, PsbX, PsbY, PsbZ, Psb30/Ycf12, at least 3 peripheral proteins of the oxygen-evolving complex and a large number of cofactors. It forms dimeric complexes. It depends on The D1/D2 heterodimer binds P680, chlorophylls that are the primary electron donor of PSII, and subsequent electron acceptors. It shares a non-heme iron and each subunit binds pheophytin, quinone, additional chlorophylls, carotenoids and lipids. D1 provides most of the ligands for the Mn4-Ca-O5 cluster of the oxygen-evolving complex (OEC). There is also a Cl(-1) ion associated with D1 and D2, which is required for oxygen evolution. The PSII complex binds additional chlorophylls, carotenoids and specific lipids. as a cofactor. Tyr-161 forms a radical intermediate that is referred to as redox-active TyrZ, YZ or Y-Z. In terms of processing, C-terminally processed by CTPA; processing is essential to allow assembly of the oxygen-evolving complex and thus photosynthetic growth.

Its subcellular location is the plastid. The protein localises to the chloroplast thylakoid membrane. It carries out the reaction 2 a plastoquinone + 4 hnu + 2 H2O = 2 a plastoquinol + O2. Photosystem II (PSII) is a light-driven water:plastoquinone oxidoreductase that uses light energy to abstract electrons from H(2)O, generating O(2) and a proton gradient subsequently used for ATP formation. It consists of a core antenna complex that captures photons, and an electron transfer chain that converts photonic excitation into a charge separation. The D1/D2 (PsbA/PsbD) reaction center heterodimer binds P680, the primary electron donor of PSII as well as several subsequent electron acceptors. This Adiantum capillus-veneris (Maidenhair fern) protein is Photosystem II protein D1.